We begin with the raw amino-acid sequence, 91 residues long: ATP synthase subunit c (91 aa).

2 consecutive transmembrane segments (helical) span residues 4–24 and 53–73; these read FTMCVLAAGIGMALGTLGTGI and IGLAMIESLAIYALVVCLIIL.

The protein belongs to the ATPase C chain family. F-type ATPases have 2 components, F(1) - the catalytic core - and F(0) - the membrane proton channel. F(1) has five subunits: alpha(3), beta(3), gamma(1), delta(1), epsilon(1). F(0) has three main subunits: a(1), b(2) and c(10-14). The alpha and beta chains form an alternating ring which encloses part of the gamma chain. F(1) is attached to F(0) by a central stalk formed by the gamma and epsilon chains, while a peripheral stalk is formed by the delta and b chains.

The protein resides in the cell inner membrane. F(1)F(0) ATP synthase produces ATP from ADP in the presence of a proton or sodium gradient. F-type ATPases consist of two structural domains, F(1) containing the extramembraneous catalytic core and F(0) containing the membrane proton channel, linked together by a central stalk and a peripheral stalk. During catalysis, ATP synthesis in the catalytic domain of F(1) is coupled via a rotary mechanism of the central stalk subunits to proton translocation. Its function is as follows. Key component of the F(0) channel; it plays a direct role in translocation across the membrane. A homomeric c-ring of between 10-14 subunits forms the central stalk rotor element with the F(1) delta and epsilon subunits. The polypeptide is ATP synthase subunit c (Geotalea daltonii (strain DSM 22248 / JCM 15807 / FRC-32) (Geobacter daltonii)).